The chain runs to 488 residues: 3-octaprenyl-4-hydroxybenzoate carboxy-lyase (488 aa).

Position 172 (Asn-172) interacts with Mn(2+). Residues 175–177 (IYR), 189–191 (RWL), and 194–195 (RG) contribute to the prenylated FMN site. Glu-238 is a Mn(2+) binding site. Asp-287 acts as the Proton donor in catalysis.

This sequence belongs to the UbiD family. In terms of assembly, homohexamer. Prenylated FMN is required as a cofactor. The cofactor is Mn(2+).

The protein resides in the cell membrane. It carries out the reaction a 4-hydroxy-3-(all-trans-polyprenyl)benzoate + H(+) = a 2-(all-trans-polyprenyl)phenol + CO2. It functions in the pathway cofactor biosynthesis; ubiquinone biosynthesis. Functionally, catalyzes the decarboxylation of 3-octaprenyl-4-hydroxy benzoate to 2-octaprenylphenol, an intermediate step in ubiquinone biosynthesis. The sequence is that of 3-octaprenyl-4-hydroxybenzoate carboxy-lyase from Halorhodospira halophila (strain DSM 244 / SL1) (Ectothiorhodospira halophila (strain DSM 244 / SL1)).